The chain runs to 56 residues: Ribosome biogenesis protein Nop10 (56 aa).

The protein belongs to the NOP10 family.

In terms of biological role, involved in ribosome biogenesis; more specifically in 18S rRNA pseudouridylation and in cleavage of pre-rRNA. The polypeptide is Ribosome biogenesis protein Nop10 (Saccharolobus islandicus (strain Y.N.15.51 / Yellowstone #2) (Sulfolobus islandicus)).